The chain runs to 105 residues: MADWSGEYISPYAEHGKKSEQVKKITVSIPIKVLEILTNERTRRQIKNLRHATNSELLCEAFLHAFTGQPLPTDDDLMKERSDEIPEEAKAKMRELGIDPDNWQY.

Belongs to the MetJ family. In terms of assembly, homodimer.

The protein resides in the cytoplasm. In terms of biological role, this regulatory protein, when combined with SAM (S-adenosylmethionine) represses the expression of the methionine regulon and of enzymes involved in SAM synthesis. In Actinobacillus pleuropneumoniae serotype 7 (strain AP76), this protein is Met repressor.